The chain runs to 100 residues: Urease subunit gamma (100 aa).

Belongs to the urease gamma subunit family. Heterotrimer of UreA (gamma), UreB (beta) and UreC (alpha) subunits. Three heterotrimers associate to form the active enzyme.

Its subcellular location is the cytoplasm. The enzyme catalyses urea + 2 H2O + H(+) = hydrogencarbonate + 2 NH4(+). It functions in the pathway nitrogen metabolism; urea degradation; CO(2) and NH(3) from urea (urease route): step 1/1. The polypeptide is Urease subunit gamma (Polynucleobacter asymbioticus (strain DSM 18221 / CIP 109841 / QLW-P1DMWA-1) (Polynucleobacter necessarius subsp. asymbioticus)).